The primary structure comprises 240 residues: ATP-dependent dethiobiotin synthetase BioD (240 aa).

An ATP-binding site is contributed by 15-20 (EIGKTF). T19 contacts Mg(2+). The active site involves K40. ATP contacts are provided by residues D57, 118–121 (EGVG), and 178–179 (NR). Mg(2+) contacts are provided by D57 and E118.

Belongs to the dethiobiotin synthetase family. In terms of assembly, homodimer. The cofactor is Mg(2+).

The protein resides in the cytoplasm. It catalyses the reaction (7R,8S)-7,8-diammoniononanoate + CO2 + ATP = (4R,5S)-dethiobiotin + ADP + phosphate + 3 H(+). Its pathway is cofactor biosynthesis; biotin biosynthesis; biotin from 7,8-diaminononanoate: step 1/2. In terms of biological role, catalyzes a mechanistically unusual reaction, the ATP-dependent insertion of CO2 between the N7 and N8 nitrogen atoms of 7,8-diaminopelargonic acid (DAPA, also called 7,8-diammoniononanoate) to form a ureido ring. In Burkholderia thailandensis (strain ATCC 700388 / DSM 13276 / CCUG 48851 / CIP 106301 / E264), this protein is ATP-dependent dethiobiotin synthetase BioD.